A 295-amino-acid chain; its full sequence is Ribosomal protein L11 methyltransferase (295 aa).

S-adenosyl-L-methionine is bound by residues T145, G166, D188, and N230.

The protein belongs to the methyltransferase superfamily. PrmA family.

It localises to the cytoplasm. The enzyme catalyses L-lysyl-[protein] + 3 S-adenosyl-L-methionine = N(6),N(6),N(6)-trimethyl-L-lysyl-[protein] + 3 S-adenosyl-L-homocysteine + 3 H(+). Its function is as follows. Methylates ribosomal protein L11. The protein is Ribosomal protein L11 methyltransferase of Pectobacterium atrosepticum (strain SCRI 1043 / ATCC BAA-672) (Erwinia carotovora subsp. atroseptica).